The primary structure comprises 265 residues: Histone H1 (265 aa).

Over residues 1 to 27 (MATEEPIVAVETVPEPIVTEPTTITEP) the composition is skewed to low complexity. Disordered regions lie at residues 1-66 (MATE…PTYE), 131-226 (AAKK…TTPG), and 242-265 (VKSV…GGRK). Positions 29–42 (VPEKEEPKAEVEKT) are enriched in basic and acidic residues. A compositionally biased stretch (basic residues) spans 43–55 (KKAKGSKPKKASK). The region spanning 61-130 (SHPTYEEMIK…KVKGSFKLSA (70 aa)) is the H15 domain. Basic residues predominate over residues 140–171 (PKAKTAAKAKSVKAKPAAKPKAKAVVKPKVAS). Residues 186–202 (KPKTVAAKTKPTAAKPK) show a composition bias toward low complexity. Residues 203 to 215 (AVVKPKSKVKPAK) show a composition bias toward basic residues. The span at 216-226 (VAKTSVKTTPG) shows a compositional bias: low complexity.

It belongs to the histone H1/H5 family.

It is found in the nucleus. Its subcellular location is the chromosome. Functionally, histones H1 are necessary for the condensation of nucleosome chains into higher-order structures. The protein is Histone H1 of Pisum sativum (Garden pea).